Consider the following 274-residue polypeptide: 2,3,4,5-tetrahydropyridine-2,6-dicarboxylate N-succinyltransferase (274 aa).

Arginine 104 and aspartate 141 together coordinate substrate.

It belongs to the transferase hexapeptide repeat family. Homotrimer.

The protein localises to the cytoplasm. It catalyses the reaction (S)-2,3,4,5-tetrahydrodipicolinate + succinyl-CoA + H2O = (S)-2-succinylamino-6-oxoheptanedioate + CoA. The protein operates within amino-acid biosynthesis; L-lysine biosynthesis via DAP pathway; LL-2,6-diaminopimelate from (S)-tetrahydrodipicolinate (succinylase route): step 1/3. This chain is 2,3,4,5-tetrahydropyridine-2,6-dicarboxylate N-succinyltransferase, found in Salmonella typhi.